The following is a 514-amino-acid chain: uncharacterized protein (514 aa).

Disordered stretches follow at residues 1 to 68 (MSSP…SESE), 109 to 244 (VPPP…RQAS), and 272 to 484 (RPAV…AQGC). Residues 368 to 384 (KPQKPKHSSPGKKPAGR) are compositionally biased toward basic residues. The span at 385-405 (KTRESQAAAREDNDPNRDEVP) shows a compositional bias: basic and acidic residues.

This is an uncharacterized protein from Homo sapiens (Human).